The following is a 3159-amino-acid chain: E1A-binding protein p400 (3159 aa).

Residues 1–16 (MHHGTGPQNVQHQLQR) are compositionally biased toward polar residues. Disordered regions lie at residues 1 to 65 (MHHG…MNRS), 125 to 154 (SPLSQQVQTQSPTQPSPGPGQALQNVRAGA), 212 to 261 (PGTP…HITT), 282 to 359 (VLQG…PASP), 545 to 594 (LMPT…PQLP), 633 to 658 (QQPNVPIPAPPSSQLPIPPSQPAQLA), and 684 to 770 (TRLP…SQDT). Over residues 31–41 (HPNPPPSPAAP) the composition is skewed to pro residues. The segment covering 42-55 (FAPSASPSAPQSPS) has biased composition (low complexity). S53 is modified (phosphoserine). Polar residues predominate over residues 56–65 (YQIQQLMNRS). 2 stretches are compositionally biased toward low complexity: residues 125 to 137 (SPLSQQVQTQSPT) and 237 to 256 (LGPQSPAAAGGAGLQPLASP). Residue S135 is modified to Phosphoserine. A phosphoserine mark is found at S315 and S321. Residues 558-571 (QAAQLAGQRQSQQQ) show a composition bias toward low complexity. Polar residues predominate over residues 572–585 (YDPSTGPPVQNAAS). 2 stretches are compositionally biased toward pro residues: residues 637–653 (VPIPAPPSSQLPIPPSQ) and 689–698 (DPAPPCPRPL). A compositionally biased stretch (low complexity) spans 699-711 (PTSSTSSLAPVSG). 2 stretches are compositionally biased toward polar residues: residues 725 to 742 (NRPSSATNKALSPVTSRT) and 751 to 760 (TKPQSPAQNA). A phosphoserine mark is found at S736 and S755. The span at 761–770 (TSSQDSSQDT) shows a compositional bias: low complexity. The 73-residue stretch at 799-871 (LPKLQEAPRP…EQSRLRRIAA (73 aa)) folds into the HSA domain. Disordered regions lie at residues 915–967 (ELRP…GVVD) and 997–1024 (SSQWPRPKPDGEDTSGEEDADDCPGDRE). 2 positions are modified to phosphoserine: S928 and S941. Phosphothreonine is present on T945. Composition is skewed to acidic residues over residues 945 to 962 (TDDEVDDEEETIEEEEAN) and 1008 to 1019 (EDTSGEEDADDC). The interactions with RUVBL1 and RUVBL2 stretch occupies residues 951–1365 (DEEETIEEEE…NVLSILVRLQ (415 aa)). At S1011 the chain carries Phosphoserine. The Helicase ATP-binding domain maps to 1103 to 1268 (AKLYRKNLNG…WTMVHFLVPG (166 aa)). 1116-1123 (DEAGLGKT) lines the ATP pocket. The short motif at 1219–1222 (DEMQ) is the DEAH box-like element. Residues 1467 to 1582 (VQYGQKPEGR…QAPSHAAGQS (116 aa)) are disordered. Residue K1472 is modified to N6-acetyllysine. Composition is skewed to low complexity over residues 1481 to 1498 (PSTHPPRTAAPTTASAAP) and 1538 to 1565 (PASASSTAASPAHPAKLRAQTTAQASTP). Phosphoserine occurs at positions 1547, 1728, and 1732. The tract at residues 1787-1807 (GSLDGRRGKEAGPAHSYTSSS) is disordered. The span at 1789–1798 (LDGRRGKEAG) shows a compositional bias: basic and acidic residues. A Helicase C-terminal domain is found at 1899-2056 (KLEALAILLQ…GNDYSMAFLT (158 aa)). 2 disordered regions span residues 2119-2144 (KSAQEGVLGPHTDALSSDSENMPCDE) and 2287-2311 (KERKRHKTDPSAAGRKKKQRHGEAV). Residues K2349 and K2356 each carry the N6-acetyllysine modification. The region spanning 2360–2429 (EPGQDNPEWL…QCRNRYENVI (70 aa)) is the Myb-like domain. 2 disordered regions span residues 2524 to 2602 (KEKK…AQPA) and 2665 to 2688 (TPGGSAPAQVVHTQPPPRAVGSPA). An interaction with ZNF42 region spans residues 2524 to 2789 (KEKKALADQQ…QQQQQTTTTS (266 aa)). Positions 2530–2540 (ADQQKAQQPAV) are enriched in low complexity. 2 stretches are compositionally biased toward pro residues: residues 2541–2563 (AQPPPPQPQPPPPPQQPPPPLPQ) and 2572–2589 (PAGPPAVQPQPQPQPQTQ). Positions 2590 to 2602 (PQPVQAPAKAQPA) are enriched in low complexity. S2686 is subject to Phosphoserine. Position 2813 is a phosphothreonine (T2813). Disordered regions lie at residues 2821-2869 (QKQK…TAPR) and 3115-3159 (APLQ…PPCQ). The span at 2828 to 2843 (PPQPPPPQAQSAPPQP) shows a compositional bias: pro residues. Positions 2844–2866 (TAQVQVQTSQPPQQQSPQLTTVT) are enriched in low complexity. Over residues 3129–3140 (PASSDSPSQQPK) the composition is skewed to polar residues.

Belongs to the SNF2/RAD54 helicase family. SWR1 subfamily. As to quaternary structure, component of the NuA4 histone acetyltransferase complex which contains the catalytic subunit KAT5/TIP60 and the subunits EP400, TRRAP/PAF400, BRD8/SMAP, EPC1, DMAP1/DNMAP1, RUVBL1/TIP49, RUVBL2, ING3, actin, ACTL6A/BAF53A, MORF4L1/MRG15, MORF4L2/MRGX, MRGBP, YEATS4/GAS41, VPS72/YL1 and MEAF6. May also participate in the formation of NuA4 related complexes which lack the KAT5/TIP60 catalytic subunit, but which include the SWI/SNF related protein SRCAP. The NuA4 complex interacts with MYC and the adenovirus E1A protein. EP400 interacts with TRRAP, RUVBL1 and RUVBL2. Component of a SWR1-like complex. Interacts with ZNF42. Interacts with PHF5A. Interacts with human cytomegalovirus UL27. Interacts with human adenovirus 5 E1A protein; this interaction stabilizes MYC. Ubiquitously expressed.

It localises to the nucleus. Functionally, component of the NuA4 histone acetyltransferase complex which is involved in transcriptional activation of select genes principally by acetylation of nucleosomal histones H4 and H2A. This modification may both alter nucleosome - DNA interactions and promote interaction of the modified histones with other proteins which positively regulate transcription. May be required for transcriptional activation of E2F1 and MYC target genes during cellular proliferation. The NuA4 complex ATPase and helicase activities seem to be, at least in part, contributed by the association of RUVBL1 and RUVBL2 with EP400. May regulate ZNF42 transcription activity. Component of a SWR1-like complex that specifically mediates the removal of histone H2A.Z/H2AZ1 from the nucleosome. The protein is E1A-binding protein p400 (EP400) of Homo sapiens (Human).